Here is a 226-residue protein sequence, read N- to C-terminus: MSTLAEVYTIIEDAEQECRKGDFTNAKAKYQEAIEVLGPQNENLSQNKLSSDVTQAIDLLKQDITAKIQELELLIEKQSSEENNIGMVNNNMLIGSVILNNKSPINGISNARNWDNPAYQDTLSPINDPLLMSILNRLQFNLNNDIQLKTEGGKNSKNSEMKINLRLEQFKKELVLYEQKKFKEYGMKIDEITKENKKLANEIGRLRERWDSLVESAKQRRDKQKN.

Ser-2 bears the N-acetylserine mark. Coiled-coil stretches lie at residues 52–85 (DVTQ…ENNI) and 182–209 (FKEY…LRER).

Belongs to the ATG38 family. Homodimer. Component of the autophagy-specific VPS34 PI3-kinase complex I composed of VPS15, VPS30, VPS34, ATG14 and an ATG38 homodimer. Interacts directly with ATG14 and VPS34.

It is found in the cytoplasm. The protein localises to the preautophagosomal structure membrane. In terms of biological role, autophagy-related protein required for cytoplasm to vacuole transport (Cvt) and autophagy as a part of the autophagy-specific VPS34 PI3-kinase complex I. This complex is essential to recruit the ATG8-phosphatidylinositol conjugate and the ATG12-ATG5 conjugate to the pre-autophagosomal structure. ATG38 is required for the integrity of the active PI3-kinase complex I by maintaining an association between VPS15-VPS34 and ATG14-VPS30 subcomplexes. This is PtdIns3K complex I subunit atg38 from Saccharomyces cerevisiae (strain ATCC 204508 / S288c) (Baker's yeast).